We begin with the raw amino-acid sequence, 533 residues long: MSNLKWRALLVVVVLIVGVVYLVPTFVSTLPPGWSKFLPKDKIRLGLDLQGGMHLILEVEADQAVSNTATRLAEDLKDAFRKEKIAFNKIDKTGKWDIEVQLPGTEQQSQIGPLVEKEFPTLKWVSAETQPEGTVKVMLTVHEKEVERVQKAAIAQGLETIRNRIDQFGVSEPDIRPQGEDRILVQLPGIQDPQRAVELIGKTAQLEFKLVAEGVSPQDVKSGKAPAGTKIYPMKHTDRTTRQRTESQIVLNDRTLMSGEYITNAQVEIDRQHSSSYVALDFDAQGAKLFEKITEANVKKQLAIVLDGVVYSAPVIQETIGGGKATITGSFTDQEARDLAIVLRAGALPAPVKILEQRTVGPSLGADSINKGVLASIVGGIGTILFMLIYYRFGGVVADLALALNVLLVLAGMAAFGFTLTLPGIAGIALTIGMAVDANVLIYERIREELRLGKTPRAALETGYDRATLTILDANVTTIIAALVLLQFGTGPVRGFAVTLTVGLAANMFTAIFVTRVIFDYLLVQRRIKTLSI.

The next 6 helical transmembrane spans lie at 8 to 28, 377 to 397, 400 to 420, 422 to 442, 469 to 489, and 495 to 515; these read ALLVVVVLIVGVVYLVPTFVS, IVGGIGTILFMLIYYRFGGVV, LALALNVLLVLAGMAAFGFTL, LPGIAGIALTIGMAVDANVLI, LTILDANVTTIIAALVLLQFG, and GFAVTLTVGLAANMFTAIFVT.

The protein belongs to the SecD/SecF family. SecD subfamily. Forms a complex with SecF. Part of the essential Sec protein translocation apparatus which comprises SecA, SecYEG and auxiliary proteins SecDF-YajC and YidC.

It localises to the cell inner membrane. Part of the Sec protein translocase complex. Interacts with the SecYEG preprotein conducting channel. SecDF uses the proton motive force (PMF) to complete protein translocation after the ATP-dependent function of SecA. In Syntrophobacter fumaroxidans (strain DSM 10017 / MPOB), this protein is Protein translocase subunit SecD.